The following is a 141-amino-acid chain: uncharacterized protein (141 aa).

Positions 1–17 (MNKSESENDSEYHKEYS) are enriched in basic and acidic residues. The tract at residues 1–24 (MNKSESENDSEYHKEYSESSDPED) is disordered. The stretch at 52 to 115 (IQNLNNNVKE…QMLFEKMRDM (64 aa)) forms a coiled coil.

This is an uncharacterized protein from Acanthamoeba polyphaga (Amoeba).